Here is a 128-residue protein sequence, read N- to C-terminus: DNA-directed RNA polymerase subunit omega (128 aa).

The protein belongs to the RNA polymerase subunit omega family. In terms of assembly, the RNAP catalytic core consists of 2 alpha, 1 beta, 1 beta' and 1 omega subunit. When a sigma factor is associated with the core the holoenzyme is formed, which can initiate transcription.

It catalyses the reaction RNA(n) + a ribonucleoside 5'-triphosphate = RNA(n+1) + diphosphate. Promotes RNA polymerase assembly. Latches the N- and C-terminal regions of the beta' subunit thereby facilitating its interaction with the beta and alpha subunits. The polypeptide is DNA-directed RNA polymerase subunit omega (Azorhizobium caulinodans (strain ATCC 43989 / DSM 5975 / JCM 20966 / LMG 6465 / NBRC 14845 / NCIMB 13405 / ORS 571)).